A 409-amino-acid chain; its full sequence is Peptidase T (409 aa).

Histidine 78 contributes to the Zn(2+) binding site. Residue aspartate 80 is part of the active site. Residue aspartate 139 participates in Zn(2+) binding. The active-site Proton acceptor is glutamate 173. 3 residues coordinate Zn(2+): glutamate 174, aspartate 196, and histidine 378.

The protein belongs to the peptidase M20B family. Requires Zn(2+) as cofactor.

The protein localises to the cytoplasm. It carries out the reaction Release of the N-terminal residue from a tripeptide.. Cleaves the N-terminal amino acid of tripeptides. The sequence is that of Peptidase T from Shewanella sediminis (strain HAW-EB3).